Here is a 235-residue protein sequence, read N- to C-terminus: FITMNFVVEAASSNANQAITSENSIKPKGKLQPQMEKYTLTYFNGRGRAEVIRLLFALANVSYEDNRITRDEWKYLKPRTPFGHVPMLNVSGNVLGESHAIELLLGGRFGLLGTNDWEEAKIMAVVLNIDELFQKLIPWTHEKNTTKKAELFRNLSESDVMPFLGRYEKFLKESTTGHIVGNKVSVADLTVFNMLMTLDDEVKLEEYPQLASFVNKIGQMPGIKEWIKKRPKTYF.

In terms of domain architecture, GST N-terminal spans 36–113; that stretch reads EKYTLTYFNG…LLGGRFGLLG (78 aa). Glutathione-binding positions include Tyr42, Trp73, Lys77, Val85, and 97-98; that span reads ES. Residues 115-235 enclose the GST C-terminal domain; the sequence is NDWEEAKIMA…WIKKRPKTYF (121 aa).

Belongs to the GST superfamily. As to quaternary structure, homodimer.

It catalyses the reaction RX + glutathione = an S-substituted glutathione + a halide anion + H(+). This Onchocerca volvulus protein is Glutathione S-transferase 1 (GST1).